The primary structure comprises 275 residues: Beta-lactamase OXA-15 (275 aa).

An N-terminal signal peptide occupies residues 1–21; sequence MAIRIFAILFSIFSLATFAHA. The Acyl-ester intermediate role is filled by S72. K75 carries the N6-carboxylysine modification. 210–212 lines the substrate pocket; it reads KTG.

It belongs to the class-D beta-lactamase family.

It carries out the reaction a beta-lactam + H2O = a substituted beta-amino acid. Functionally, hydrolyzes oxacillin, first-generation cephalosporins and ceftazidime. Does not hydrolyze cefotaxime or carbapenems. The polypeptide is Beta-lactamase OXA-15 (bla) (Pseudomonas aeruginosa).